A 275-amino-acid polypeptide reads, in one-letter code: Ribosomal RNA small subunit methyltransferase A (275 aa).

Positions 21, 23, 48, 69, 94, and 115 each coordinate S-adenosyl-L-methionine.

It belongs to the class I-like SAM-binding methyltransferase superfamily. rRNA adenine N(6)-methyltransferase family. RsmA subfamily.

The protein resides in the cytoplasm. It carries out the reaction adenosine(1518)/adenosine(1519) in 16S rRNA + 4 S-adenosyl-L-methionine = N(6)-dimethyladenosine(1518)/N(6)-dimethyladenosine(1519) in 16S rRNA + 4 S-adenosyl-L-homocysteine + 4 H(+). Specifically dimethylates two adjacent adenosines (A1518 and A1519) in the loop of a conserved hairpin near the 3'-end of 16S rRNA in the 30S particle. May play a critical role in biogenesis of 30S subunits. This chain is Ribosomal RNA small subunit methyltransferase A, found in Clostridium botulinum (strain ATCC 19397 / Type A).